Reading from the N-terminus, the 156-residue chain is Cyanate hydratase (156 aa).

Residues arginine 96, glutamate 99, and serine 122 contribute to the active site.

This sequence belongs to the cyanase family.

The enzyme catalyses cyanate + hydrogencarbonate + 3 H(+) = NH4(+) + 2 CO2. Its function is as follows. Catalyzes the reaction of cyanate with bicarbonate to produce ammonia and carbon dioxide. The polypeptide is Cyanate hydratase (Pseudomonas fluorescens (strain ATCC BAA-477 / NRRL B-23932 / Pf-5)).